Here is a 396-residue protein sequence, read N- to C-terminus: Putative F-box/kelch-repeat protein At4g11770 (396 aa).

The region spanning 9–55 is the F-box domain; sequence PCNMPYLPDDLLLNILGRVSRLYYPILSLVSKRFRSLVGSLELYKIR. Kelch repeat units follow at residues 151–197, 198–248, and 250–296; these read YIYM…VLDG, KIYV…YEEK, and YLFG…VFYK.

This is Putative F-box/kelch-repeat protein At4g11770 from Arabidopsis thaliana (Mouse-ear cress).